We begin with the raw amino-acid sequence, 139 residues long: Peptide methionine sulfoxide reductase MsrB (139 aa).

One can recognise a MsrB domain in the interval 9–131 (TPSDNTELTE…NSASLSFIDD (123 aa)). Residues cysteine 48, cysteine 51, cysteine 97, and cysteine 100 each contribute to the Zn(2+) site. The active-site Nucleophile is the cysteine 120.

It belongs to the MsrB Met sulfoxide reductase family. It depends on Zn(2+) as a cofactor.

It carries out the reaction L-methionyl-[protein] + [thioredoxin]-disulfide + H2O = L-methionyl-(R)-S-oxide-[protein] + [thioredoxin]-dithiol. This chain is Peptide methionine sulfoxide reductase MsrB, found in Pectobacterium carotovorum subsp. carotovorum (strain PC1).